The primary structure comprises 481 residues: Zinc metalloproteinase/disintegrin (481 aa).

The N-terminal stretch at 1 to 20 is a signal peptide; the sequence is MIQVLLVTICLAVFPYQGSS. The propeptide occupies 21-190; it reads IILESGNVDD…KASQLYLTPE (170 aa). Positions 197–392 constitute a Peptidase M12B domain; that stretch reads RHIELAIVVD…KKPQCILNAP (196 aa). Residues Glu-200 and Asp-284 each contribute to the Ca(2+) site. Intrachain disulfides connect Cys-308–Cys-387, Cys-349–Cys-371, and Cys-351–Cys-354. Position 333 (His-333) interacts with Zn(2+). The active site involves Glu-334. Positions 337 and 343 each coordinate Zn(2+). Positions 387 and 390 each coordinate Ca(2+). A propeptide spanning residues 393-410 is cleaved from the precursor; it reads LRTDTVSTPISGNEFLEA. The Disintegrin domain occupies 400–481; it reads TPISGNEFLE…ADCPRNGLYG (82 aa). Disulfide bonds link Cys-414-Cys-429, Cys-416-Cys-424, Cys-423-Cys-446, Cys-437-Cys-443, Cys-442-Cys-467, and Cys-455-Cys-474. The Cell attachment site signature appears at 459–461; that stretch reads RGD.

The protein belongs to the venom metalloproteinase (M12B) family. P-II subfamily. P-IIa sub-subfamily. Monomer. Requires Zn(2+) as cofactor. As to expression, expressed by the venom gland.

It is found in the secreted. In terms of biological role, impairs hemostasis in the envenomed animal. Its function is as follows. Inhibits platelet aggregation induced by ADP and collagen. Acts by inhibiting fibrinogen interaction with platelet receptors GPIIb/GPIIIa (ITGA2B/ITGB3). Has antitumor-growth activity. The polypeptide is Zinc metalloproteinase/disintegrin (Protobothrops jerdonii (Jerdon's pitviper)).